We begin with the raw amino-acid sequence, 605 residues long: Glucose-6-phosphate isomerase (605 aa).

Glu410 functions as the Proton donor in the catalytic mechanism. Residues His441 and Lys569 contribute to the active site.

This sequence belongs to the GPI family.

It is found in the cytoplasm. It carries out the reaction alpha-D-glucose 6-phosphate = beta-D-fructose 6-phosphate. Its pathway is carbohydrate degradation; glycolysis; D-glyceraldehyde 3-phosphate and glycerone phosphate from D-glucose: step 2/4. The sequence is that of Glucose-6-phosphate isomerase (PGI) from Leishmania mexicana.